The chain runs to 212 residues: ER lumen protein-retaining receptor 1-B (212 aa).

The Lumenal portion of the chain corresponds to 1 to 4 (MNIF). A helical transmembrane segment spans residues 5–24 (RFLGDISHLSAIIILLLKIW). Over 25-32 (KSRSCAGI) the chain is Cytoplasmic. The helical transmembrane segment at 33–52 (SGKSQLLFAIVFTTRYLDLF) threads the bilayer. Residues 47–48 (RY) are interaction with the K-D-E-L motif on target proteins. The Lumenal portion of the chain corresponds to 53-58 (TNFISF). The chain crosses the membrane as a helical span at residues 59–79 (YNTSMKVVYVASSYATVWMIY). Residues 80–92 (SKFKATYDGNHDT) lie on the Cytoplasmic side of the membrane. The helical transmembrane segment at 93 to 110 (FRVEFLIVPTAILSFLVN) threads the bilayer. At 111–116 (HDFTPL) the chain is on the lumenal side. Residues 117–135 (EILWTFSIYLESVAILPQL) traverse the membrane as a helical segment. Over 136–149 (FMVSKTGEAETITS) the chain is Cytoplasmic. The chain crosses the membrane as a helical span at residues 150–168 (HYLFALGIYRTLYLFNWIW). The tract at residues 159 to 169 (RTLYLFNWIWR) is interaction with the K-D-E-L motif on target proteins. The Lumenal portion of the chain corresponds to 169 to 178 (RYQFEEFFDL). A helical membrane pass occupies residues 179–199 (IAIVAGLVQTVLYCDFFYLYI). Residues 200 to 212 (TKVLKGKKLSLPA) lie on the Cytoplasmic side of the membrane. The interval 204-207 (KGKK) is important for recycling of cargo proteins with the sequence motif K-D-E-L from the Golgi to the endoplasmic reticulum.

The protein belongs to the ERD2 family.

The protein resides in the golgi apparatus membrane. The protein localises to the cytoplasmic vesicle. It is found in the COPI-coated vesicle membrane. Its subcellular location is the endoplasmic reticulum membrane. It localises to the endoplasmic reticulum-Golgi intermediate compartment membrane. Receptor for the C-terminal sequence motif K-D-E-L that is present on endoplasmic reticulum resident proteins and that mediates their recycling from the Golgi back to the endoplasmic reticulum. The protein is ER lumen protein-retaining receptor 1-B (kdelr1-b) of Xenopus laevis (African clawed frog).